We begin with the raw amino-acid sequence, 605 residues long: Sodium-independent sulfate anion transporter (605 aa).

The Extracellular portion of the chain corresponds to 1–50; the sequence is MPSSLKGLGQAWLSSSSMALSACCSVSAWQKRLPVLAWLPRYSLQWLKMD. Residues 51 to 71 traverse the membrane as a helical segment; that stretch reads FIAGLSVGLTVIPQALAYAEV. Ala72 is a topological domain (cytoplasmic). The helical transmembrane segment at 73 to 93 threads the bilayer; it reads GLPPQYGLYSAFTGCFVYVFL. The Extracellular segment spans residues 94–98; it reads GTSRD. A helical transmembrane segment spans residues 99–119; sequence VTLGPTAIMSLLVSFYTFHEP. The Cytoplasmic segment spans residues 120-122; that stretch reads AYA. Residues 123-143 form a helical membrane-spanning segment; the sequence is VLLTFLSGCIQLAMGLLHLGF. Over 144 to 146 the chain is Extracellular; the sequence is LLD. Residues 147 to 167 traverse the membrane as a helical segment; it reads FISCPVIKGFTSAAAIIIGFG. Residues 168–196 lie on the Cytoplasmic side of the membrane; that stretch reads QIKNLLGLHNIPRQFFLQVYHTFLSVGET. The helical transmembrane segment at 197-217 threads the bilayer; that stretch reads RLGDAILGLVCMVLLLVLKLM. Topologically, residues 218–249 are extracellular; that stretch reads RDRIPPVHPEMPLCVRLSCGLVWTTATARNAL. Residues 250–270 form a helical membrane-spanning segment; the sequence is VVSFAALVAYSFEVTGYQPFI. At 271–303 the chain is on the cytoplasmic side; the sequence is LTGEIAKGLPPVRVPPFSVTMANGTVSFTRMVQ. Residues 304–324 traverse the membrane as a helical segment; sequence DLGAGLAVVPLIGLLESIAVA. Topologically, residues 325–340 are extracellular; the sequence is KAFASQNDYHVDANQE. Residues 341–361 traverse the membrane as a helical segment; it reads LLAIGLTNMLGSFVSSYPITG. At 362–373 the chain is on the cytoplasmic side; the sequence is SFGRTAVNAQSG. Residues 374–394 traverse the membrane as a helical segment; the sequence is VCTPAGGLVTGALVLLSLDYL. Topologically, residues 395–397 are extracellular; the sequence is TSL. Residues 398 to 418 traverse the membrane as a helical segment; that stretch reads FYYIPKAALAAVIIMAVVPLF. Over 419 to 447 the chain is Cytoplasmic; that stretch reads DTKIFGMLWRVKRLDLLPLCATFLLCFWE. The helical transmembrane segment at 448-468 threads the bilayer; that stretch reads VQYGILAGTLVSTLFLLHFVA. The Extracellular segment spans residues 469–605; it reads RPKTQVSEGP…PEHKVTLLTA (137 aa). Residues 479-582 form the STAS domain; sequence VLILQLASGL…EKAEQYVRQE (104 aa).

Belongs to the SLC26A/SulP transporter (TC 2.A.53) family.

Its subcellular location is the cell membrane. The protein resides in the lysosome membrane. It is found in the apical cell membrane. The protein localises to the basolateral cell membrane. It carries out the reaction hydrogencarbonate(in) + chloride(out) = hydrogencarbonate(out) + chloride(in). The enzyme catalyses sulfate(in) + H(+)(in) = sulfate(out) + H(+)(out). It catalyses the reaction oxalate(in) + chloride(out) = oxalate(out) + chloride(in). Its function is as follows. Sodium-independent anion exchanger mediating bicarbonate, chloride, sulfate and oxalate transport. Exhibits sodium-independent sulfate anion transporter activity that may cooperate with SLC26A2 to mediate DIDS-sensitive sulfate uptake into high endothelial venules endothelial cells (HEVEC). In the kidney, mediates chloride-bicarbonate exchange, facilitating V-ATPase-mediated acid secretion. May function as a chloride channel, playing an important role in moderating chloride homeostasis and neuronal activity in the cerebellum. This chain is Sodium-independent sulfate anion transporter (Slc26a11), found in Cavia porcellus (Guinea pig).